The following is a 541-amino-acid chain: Phosphoenolpyruvate carboxykinase (ATP) (541 aa).

An ATP-binding site is contributed by 243 to 250 (GLSGTGKT).

This sequence belongs to the phosphoenolpyruvate carboxykinase (ATP) family.

The enzyme catalyses oxaloacetate + ATP = phosphoenolpyruvate + ADP + CO2. Its pathway is carbohydrate biosynthesis; gluconeogenesis. This chain is Phosphoenolpyruvate carboxykinase (ATP) (PCK1), found in Eremothecium gossypii (strain ATCC 10895 / CBS 109.51 / FGSC 9923 / NRRL Y-1056) (Yeast).